The following is a 233-amino-acid chain: Superoxide dismutase [Mn] 3.3, mitochondrial (233 aa).

Residues 1–29 (MALRTLASKNALSFALGGAARPSAESARG) constitute a mitochondrion transit peptide. Mn(2+) contacts are provided by H57, H105, D194, and H198.

This sequence belongs to the iron/manganese superoxide dismutase family. In terms of assembly, homotetramer. Requires Mn(2+) as cofactor. Predominantly expressed in the embryo late in embryogenesis.

The protein localises to the mitochondrion matrix. It catalyses the reaction 2 superoxide + 2 H(+) = H2O2 + O2. In terms of biological role, destroys superoxide anion radicals which are normally produced within the cells and which are toxic to biological systems. This Zea mays (Maize) protein is Superoxide dismutase [Mn] 3.3, mitochondrial (SODA.2).